The chain runs to 594 residues: uncharacterized protein (594 aa).

The zn(2)-C6 fungal-type DNA-binding region spans 11–38 (CELCRRKKIRCNRELPSCQNCIVYQEEC). Residues 503 to 523 (YLWVFLYCPFTPFLVLFSNIV) traverse the membrane as a helical segment.

It localises to the nucleus. Its subcellular location is the membrane. This is an uncharacterized protein from Schizosaccharomyces pombe (strain 972 / ATCC 24843) (Fission yeast).